Consider the following 149-residue polypeptide: HMG1/2-like protein (149 aa).

Basic and acidic residues-rich tracts occupy residues 1–15 (MKGG…KAET) and 35–44 (KGKEPKDPNK). Disordered regions lie at residues 1 to 52 (MKGG…PSAF) and 112 to 149 (AYNK…EDDD). The HMG box DNA-binding region spans 45 to 114 (PKRPPSAFFV…EYEITLQAYN (70 aa)). A compositionally biased stretch (acidic residues) spans 134-149 (NDEDEDEEDEEDEDDD).

The protein belongs to the HMGB family.

The protein localises to the nucleus. The protein is HMG1/2-like protein of Vicia faba (Broad bean).